The primary structure comprises 760 residues: Catalase-peroxidase (760 aa).

A disordered region spans residues 1–57 (MTDSQDNRTPESPQGVDRKAEGGCPVLHDGVTAQGSESENPAIDSPTPRTGGRPNSL). The segment at residues 129-251 (WHAAGTYRIH…LGAVQMGLIY (123 aa)) is a cross-link (tryptophyl-tyrosyl-methioninium (Trp-Tyr) (with M-277)). Catalysis depends on His130, which acts as the Proton acceptor. Residues 251–277 (YVNPEGPNGNPDPLASARDIRETFARM) constitute a cross-link (tryptophyl-tyrosyl-methioninium (Tyr-Met) (with W-129)). His292 lines the heme b pocket.

The protein belongs to the peroxidase family. Peroxidase/catalase subfamily. Homodimer or homotetramer. It depends on heme b as a cofactor. Formation of the three residue Trp-Tyr-Met cross-link is important for the catalase, but not the peroxidase activity of the enzyme.

It catalyses the reaction H2O2 + AH2 = A + 2 H2O. It carries out the reaction 2 H2O2 = O2 + 2 H2O. In terms of biological role, bifunctional enzyme with both catalase and broad-spectrum peroxidase activity. In Nocardioides sp. (strain ATCC BAA-499 / JS614), this protein is Catalase-peroxidase.